The primary structure comprises 241 residues: Sensory transduction protein LytT (241 aa).

Positions arginine 3 to lysine 117 constitute a Response regulatory domain. A 4-aspartylphosphate modification is found at aspartate 54. The HTH LytTR-type domain maps to leucine 137 to isoleucine 241.

In terms of processing, phosphorylated by LytS.

The protein localises to the cytoplasm. Member of the two-component regulatory system LytS/LytT that probably regulates genes involved in cell wall metabolism. This is Sensory transduction protein LytT (lytT) from Bacillus subtilis (strain 168).